We begin with the raw amino-acid sequence, 594 residues long: Aspartate--tRNA(Asp/Asn) ligase (594 aa).

E173 contacts L-aspartate. The segment at 197 to 200 is aspartate; it reads QLFK. R219 serves as a coordination point for L-aspartate. ATP is bound by residues 219–221 and Q228; that span reads RDE. L-aspartate is bound at residue H451. E485 is an ATP binding site. R492 contacts L-aspartate. 537-540 contacts ATP; sequence GWDR. Positions 566-594 are disordered; it reads PLTDAPAPITAQQRKESGIDAQPKRVQQA.

The protein belongs to the class-II aminoacyl-tRNA synthetase family. Type 1 subfamily. As to quaternary structure, homodimer.

The protein resides in the cytoplasm. The enzyme catalyses tRNA(Asx) + L-aspartate + ATP = L-aspartyl-tRNA(Asx) + AMP + diphosphate. Aspartyl-tRNA synthetase with relaxed tRNA specificity since it is able to aspartylate not only its cognate tRNA(Asp) but also tRNA(Asn). Reaction proceeds in two steps: L-aspartate is first activated by ATP to form Asp-AMP and then transferred to the acceptor end of tRNA(Asp/Asn). The chain is Aspartate--tRNA(Asp/Asn) ligase from Mycobacterium tuberculosis (strain CDC 1551 / Oshkosh).